Here is a 426-residue protein sequence, read N- to C-terminus: Dihydroorotase (426 aa).

Positions 58 and 60 each coordinate Zn(2+). Substrate contacts are provided by residues 60-62 and Asn-92; that span reads HLR. Positions 150, 177, and 230 each coordinate Zn(2+). Asn-276 contacts substrate. Position 303 (Asp-303) interacts with Zn(2+). Residue Asp-303 is part of the active site. Residues His-307 and 321–322 each bind substrate; that span reads FG.

This sequence belongs to the metallo-dependent hydrolases superfamily. DHOase family. Class I DHOase subfamily. It depends on Zn(2+) as a cofactor.

It catalyses the reaction (S)-dihydroorotate + H2O = N-carbamoyl-L-aspartate + H(+). It participates in pyrimidine metabolism; UMP biosynthesis via de novo pathway; (S)-dihydroorotate from bicarbonate: step 3/3. Functionally, catalyzes the reversible cyclization of carbamoyl aspartate to dihydroorotate. In Listeria monocytogenes serotype 4b (strain F2365), this protein is Dihydroorotase.